Here is a 425-residue protein sequence, read N- to C-terminus: Enolase (425 aa).

Gln162 lines the (2R)-2-phosphoglycerate pocket. Glu204 serves as the catalytic Proton donor. Residues Asp241, Glu284, and Asp311 each coordinate Mg(2+). Lys336, Arg365, Ser366, and Lys387 together coordinate (2R)-2-phosphoglycerate. Lys336 (proton acceptor) is an active-site residue.

This sequence belongs to the enolase family. Mg(2+) serves as cofactor.

Its subcellular location is the cytoplasm. It is found in the secreted. It localises to the cell surface. It carries out the reaction (2R)-2-phosphoglycerate = phosphoenolpyruvate + H2O. The protein operates within carbohydrate degradation; glycolysis; pyruvate from D-glyceraldehyde 3-phosphate: step 4/5. In terms of biological role, catalyzes the reversible conversion of 2-phosphoglycerate (2-PG) into phosphoenolpyruvate (PEP). It is essential for the degradation of carbohydrates via glycolysis. The sequence is that of Enolase from Brucella ovis (strain ATCC 25840 / 63/290 / NCTC 10512).